We begin with the raw amino-acid sequence, 785 residues long: DNA ligase (785 aa).

NAD(+) contacts are provided by residues 32 to 36, 81 to 82, and E121; these read DAEYD and SL. The active-site N6-AMP-lysine intermediate is K123. The NAD(+) site is built by R144, E181, K297, and K321. Positions 415, 418, 445, and 451 each coordinate Zn(2+). A BRCT domain is found at 702–785; it reads VEGLPLAGET…AFLKGHGISA (84 aa).

Belongs to the NAD-dependent DNA ligase family. LigA subfamily. It depends on Mg(2+) as a cofactor. Requires Mn(2+) as cofactor.

The catalysed reaction is NAD(+) + (deoxyribonucleotide)n-3'-hydroxyl + 5'-phospho-(deoxyribonucleotide)m = (deoxyribonucleotide)n+m + AMP + beta-nicotinamide D-nucleotide.. In terms of biological role, DNA ligase that catalyzes the formation of phosphodiester linkages between 5'-phosphoryl and 3'-hydroxyl groups in double-stranded DNA using NAD as a coenzyme and as the energy source for the reaction. It is essential for DNA replication and repair of damaged DNA. The polypeptide is DNA ligase (Pseudomonas fluorescens (strain Pf0-1)).